The primary structure comprises 774 residues: E3 ubiquitin-protein ligase UHRF1 (774 aa).

The Ubiquitin-like domain maps to 1-78 (MWIQVRTMDG…IQLLVRQSLA (78 aa)). 5 positions are modified to phosphoserine: Ser-76, Ser-91, Ser-93, Ser-95, and Ser-161. Residues 83–120 (TKERDSELSDSDSGYGVGHSESDKSSTHGEGTADGDDK) are disordered. 2 tudor-like regions span residues 129-205 (GLYK…ARAR) and 212-280 (DLEV…IELP). Lys-276 is covalently cross-linked (Glycyl lysine isopeptide (Lys-Gly) (interchain with G-Cter in SUMO2)). At Ser-284 the chain carries Phosphoserine. The linker stretch occupies residues 293-298 (RKSGPS). Ser-295 bears the Phosphoserine; by PKA mark. Residues 296 to 363 (GPSCQYCKDD…EWYCPSCRTD (68 aa)) form a PHD-type zinc finger. Histone H3R2me0 binding regions lie at residues 330-334 (CDECD) and 350-352 (PPE). Residue Ser-365 is modified to Phosphoserine. A Glycyl lysine isopeptide (Lys-Gly) (interchain with G-Cter in SUMO2) cross-link involves residue Lys-382. The methyl-CpG binding and interaction with HDAC1 stretch occupies residues 382 to 605 (KMASATSSSR…QLGLTMQYPE (224 aa)). N6-acetyllysine is present on Lys-396. The YDG domain maps to 416–578 (GPIPGVPVGT…FIVWRYLLRR (163 aa)). Residues 442-443 (HV) form a required to promote base flipping region. DNA-binding positions include 460 to 461 (AG) and Asp-466. 2 required for formation of a 5-methylcytosine-binding pocket regions span residues 463 to 466 (YEDD) and 475 to 478 (YTGS). Position 511 is a phosphoserine (Ser-511). An N6-acetyllysine; alternate modification is found at Lys-542. Lys-542 is covalently cross-linked (Glycyl lysine isopeptide (Lys-Gly) (interchain with G-Cter in SUMO2); alternate). Residues 616 to 657 (KNRKRPAKALEQGPSSSKIGKSKRKSTGPATTSPRVSKKSKL) are disordered. A Phosphoserine; by CDK1 modification is found at Ser-631. Phosphoserine is present on residues Ser-641 and Ser-648. Residue Lys-656 forms a Glycyl lysine isopeptide (Lys-Gly) (interchain with G-Cter in SUMO2) linkage. The RING-type zinc-finger motif lies at 705-744 (CICCQELVFRPVTTVCQHNVCKDCLDRSFRAQVFSCPACR). A Phosphoserine modification is found at Ser-751.

As to quaternary structure, interacts with DNMT3A and DNMT3B. Interacts with DNMT1; the interaction is direct. Interacts with USP7; leading to its deubiquitination. Interacts with histone H3. Interacts with HDAC1, but not with HDAC2. Interacts with BLTP3A. Interacts with PML. Interacts with EHMT2. Binds methylated CpG containing oligonucleotides. Interacts with ZNF263; recruited to the SIX3 promoter along with other proteins involved in chromatin modification and transcriptional corepression where it contributes to transcriptional repression. Interacts with UHRF2. Interacts with FANCD2. Interacts with TET1 isoform 2; this interaction induces the recruitment of TET1 isoform 2 to replicating heterochromatin. Post-translationally, phosphorylation at Ser-295 of the linker region decreases the binding to H3K9me3. Phosphorylation at Ser-631 by CDK1 during M phase impairs interaction with USP7, preventing deubiquitination and leading to degradation by the proteasome. In terms of processing, ubiquitinated; which leads to proteasomal degradation. Autoubiquitinated; interaction with USP7 leads to deubiquitination and prevents degradation. Ubiquitination and degradation takes place during M phase, when phosphorylation at Ser-631 prevents interaction with USP7 and subsequent deubiquitination. Polyubiquitination may be stimulated by DNA damage.

It is found in the nucleus. It carries out the reaction S-ubiquitinyl-[E2 ubiquitin-conjugating enzyme]-L-cysteine + [acceptor protein]-L-lysine = [E2 ubiquitin-conjugating enzyme]-L-cysteine + N(6)-ubiquitinyl-[acceptor protein]-L-lysine.. It functions in the pathway protein modification; protein ubiquitination. In terms of biological role, multidomain protein that acts as a key epigenetic regulator by bridging DNA methylation and chromatin modification. Specifically recognizes and binds hemimethylated DNA at replication forks via its YDG domain and recruits DNMT1 methyltransferase to ensure faithful propagation of the DNA methylation patterns through DNA replication. In addition to its role in maintenance of DNA methylation, also plays a key role in chromatin modification: through its tudor-like regions and PHD-type zinc fingers, specifically recognizes and binds histone H3 trimethylated at 'Lys-9' (H3K9me3) and unmethylated at 'Arg-2' (H3R2me0), respectively, and recruits chromatin proteins. Enriched in pericentric heterochromatin where it recruits different chromatin modifiers required for this chromatin replication. Also localizes to euchromatic regions where it negatively regulates transcription possibly by impacting DNA methylation and histone modifications. Has E3 ubiquitin-protein ligase activity by mediating the ubiquitination of target proteins such as histone H3 and PML. It is still unclear how E3 ubiquitin-protein ligase activity is related to its role in chromatin in vivo. Plays a role in DNA repair by cooperating with UHRF2 to ensure recruitment of FANCD2 to interstrand cross-links (ICLs) leading to FANCD2 activation. Plays a pivotal role in the establishment of correct spindle architecture by catalyzing the 'Lys-63'-linked ubiquitination of KIF11, thereby controlling KIF11 localization on the spindle. In Rattus norvegicus (Rat), this protein is E3 ubiquitin-protein ligase UHRF1 (Uhrf1).